The sequence spans 289 residues: Dihydropteroate synthase (289 aa).

In terms of domain architecture, Pterin-binding spans 28–282 (TYVMGILNTT…DVEAMAQICK (255 aa)). Asn-35 is a binding site for Mg(2+). (7,8-dihydropterin-6-yl)methyl diphosphate-binding positions include Thr-75, Asp-109, Asn-128, Asp-199, Lys-235, and 270 to 272 (RVH).

This sequence belongs to the DHPS family. Requires Mg(2+) as cofactor.

The enzyme catalyses (7,8-dihydropterin-6-yl)methyl diphosphate + 4-aminobenzoate = 7,8-dihydropteroate + diphosphate. It participates in cofactor biosynthesis; tetrahydrofolate biosynthesis; 7,8-dihydrofolate from 2-amino-4-hydroxy-6-hydroxymethyl-7,8-dihydropteridine diphosphate and 4-aminobenzoate: step 1/2. In terms of biological role, catalyzes the condensation of para-aminobenzoate (pABA) with 6-hydroxymethyl-7,8-dihydropterin diphosphate (DHPt-PP) to form 7,8-dihydropteroate (H2Pte), the immediate precursor of folate derivatives. This Synechocystis sp. (strain ATCC 27184 / PCC 6803 / Kazusa) protein is Dihydropteroate synthase (folP).